The following is a 446-amino-acid chain: tRNA-2-methylthio-N(6)-dimethylallyladenosine synthase (446 aa).

The MTTase N-terminal domain maps to Lys3–Ser120. The [4Fe-4S] cluster site is built by Cys12, Cys49, Cys83, Cys157, Cys161, and Cys164. The 233-residue stretch at Arg143 to Glu375 folds into the Radical SAM core domain. The region spanning Arg378–Asp442 is the TRAM domain.

The protein belongs to the methylthiotransferase family. MiaB subfamily. As to quaternary structure, monomer. [4Fe-4S] cluster serves as cofactor.

It localises to the cytoplasm. The enzyme catalyses N(6)-dimethylallyladenosine(37) in tRNA + (sulfur carrier)-SH + AH2 + 2 S-adenosyl-L-methionine = 2-methylsulfanyl-N(6)-dimethylallyladenosine(37) in tRNA + (sulfur carrier)-H + 5'-deoxyadenosine + L-methionine + A + S-adenosyl-L-homocysteine + 2 H(+). Functionally, catalyzes the methylthiolation of N6-(dimethylallyl)adenosine (i(6)A), leading to the formation of 2-methylthio-N6-(dimethylallyl)adenosine (ms(2)i(6)A) at position 37 in tRNAs that read codons beginning with uridine. This is tRNA-2-methylthio-N(6)-dimethylallyladenosine synthase from Pseudomonas aeruginosa (strain UCBPP-PA14).